Consider the following 295-residue polypeptide: Phosphatidylserine decarboxylase proenzyme (295 aa).

Residues Asp-113, His-169, and Ser-256 each act as charge relay system; for autoendoproteolytic cleavage activity in the active site. Ser-256 acts as the Schiff-base intermediate with substrate; via pyruvic acid; for decarboxylase activity in catalysis. A Pyruvic acid (Ser); by autocatalysis modification is found at Ser-256.

Belongs to the phosphatidylserine decarboxylase family. PSD-B subfamily. Prokaryotic type II sub-subfamily. In terms of assembly, heterodimer of a large membrane-associated beta subunit and a small pyruvoyl-containing alpha subunit. The cofactor is pyruvate. Is synthesized initially as an inactive proenzyme. Formation of the active enzyme involves a self-maturation process in which the active site pyruvoyl group is generated from an internal serine residue via an autocatalytic post-translational modification. Two non-identical subunits are generated from the proenzyme in this reaction, and the pyruvate is formed at the N-terminus of the alpha chain, which is derived from the carboxyl end of the proenzyme. The autoendoproteolytic cleavage occurs by a canonical serine protease mechanism, in which the side chain hydroxyl group of the serine supplies its oxygen atom to form the C-terminus of the beta chain, while the remainder of the serine residue undergoes an oxidative deamination to produce ammonia and the pyruvoyl prosthetic group on the alpha chain. During this reaction, the Ser that is part of the protease active site of the proenzyme becomes the pyruvoyl prosthetic group, which constitutes an essential element of the active site of the mature decarboxylase.

Its subcellular location is the cell membrane. The enzyme catalyses a 1,2-diacyl-sn-glycero-3-phospho-L-serine + H(+) = a 1,2-diacyl-sn-glycero-3-phosphoethanolamine + CO2. The protein operates within phospholipid metabolism; phosphatidylethanolamine biosynthesis; phosphatidylethanolamine from CDP-diacylglycerol: step 2/2. Its function is as follows. Catalyzes the formation of phosphatidylethanolamine (PtdEtn) from phosphatidylserine (PtdSer). This chain is Phosphatidylserine decarboxylase proenzyme, found in Clostridium botulinum (strain Langeland / NCTC 10281 / Type F).